The sequence spans 341 residues: Transcription factor VIP1 (341 aa).

Disordered stretches follow at residues 1-33, 59-106, and 135-156; these read MEGG…HRRA, SLDF…PEAR, and SSGE…DGEM. The interval 1 to 162 is necessary and sufficient for transient T-DNA transformation end expression; sequence MEGGGRGPNQ…DGEMSSASFN (162 aa). The segment covering 15–24 has biased composition (basic and acidic residues); it reads EIEHMPEAPR. The segment covering 71–80 has biased composition (low complexity); it reads QSQQQPQASP. S79 carries the phosphoserine modification. The segment at 163-341 is involved in homomultimerization and histone H2A binding; it reads IESILASVSG…PSYMDFTKRG (179 aa). A bZIP domain is found at 194 to 257; sequence DPKRAKRILA…SELNTENKHL (64 aa). Residues 196–217 form a basic motif region; sequence KRAKRILANRQSAARSKERKIR. Residues 198–205 carry the Nuclear localization signal motif; the sequence is AKRILANR. Residues 222 to 257 form a leucine-zipper region; that stretch reads LERKVQTLQNEATTLSAQVTMLQRGTSELNTENKHL. A compositionally biased stretch (polar residues) spans 307-331; it reads SQQSAMNQFGNKTNQQMSTNGQPSL. The disordered stretch occupies residues 307–341; the sequence is SQQSAMNQFGNKTNQQMSTNGQPSLPSYMDFTKRG.

It belongs to the bZIP family. As to quaternary structure, forms homomultimers. Interacts with Agrobacterium tumefaciens VirE2 and mediates its translocation to the host nucleus. Binds to VIP2. Forms a complex made of Agrobacterium VirE2, VIP1, VIP2 and single-stranded DNA (ssDNA). The interaction with KAP1 mediates its nuclear import. Binds to the H2A histone RAT5. Interacts with MPK3 and Agrobacterium virF. Forms a complex made of VIP1, VBF and Agrobacterium virE2. Interacts with SCF(VBF) E3 ubiquitin ligase complex. Binds directly to VBF. Forms heterodimers with BZIP34 and BZIP61. In terms of processing, phosphorylated by MPK3. This phosphorylation promotes nuclear localization. As to expression, mostly expressed in dividing cells, present in leaves, roots and seedlings.

The protein localises to the cytoplasm. Its subcellular location is the nucleus. Functionally, transcription activator that binds specifically to the VIP1 response elements (VREs) DNA sequence 5'-ACNGCT-3' found in some stress genes (e.g. TRX8 and MYB44), when phosphorylated/activated by MPK3. Required for Agrobacterium VirE2 nuclear import and tumorigenicity. Promotes transient expression of T-DNA in early stages by interacting with VirE2 in complex with the T-DNA and facilitating its translocation to the nucleus, and mediates stable genetic transformation by Agrobacterium by binding H2A histone. Prevents cell differentiation and shoot formation. Limits sulfate utilization efficiency (SUE) and sulfate uptake, especially in low-sulfur conditions. Plays a role in osmosensory response by binding to the 5'-AGCTGT/G-3' DNA sequence found in the promoters of the hypoosmolarity-responsive genes CYP707A1 and CYP707A3. Involved in the negative regulation of touch-induced root bending and salt-dependent root bending. This Arabidopsis thaliana (Mouse-ear cress) protein is Transcription factor VIP1.